The primary structure comprises 361 residues: uncharacterized protein (361 aa).

41–48 contributes to the ATP binding site; sequence GPLNSGKT.

Belongs to the archaeal ATPase family.

This is an uncharacterized protein from Methanocaldococcus jannaschii (strain ATCC 43067 / DSM 2661 / JAL-1 / JCM 10045 / NBRC 100440) (Methanococcus jannaschii).